The sequence spans 148 residues: Large ribosomal subunit protein bL9 (148 aa).

This sequence belongs to the bacterial ribosomal protein bL9 family.

Functionally, binds to the 23S rRNA. In Agathobacter rectalis (strain ATCC 33656 / DSM 3377 / JCM 17463 / KCTC 5835 / VPI 0990) (Eubacterium rectale), this protein is Large ribosomal subunit protein bL9.